A 156-amino-acid polypeptide reads, in one-letter code: Arginine repressor (156 aa).

The protein belongs to the ArgR family.

The protein resides in the cytoplasm. It functions in the pathway amino-acid biosynthesis; L-arginine biosynthesis [regulation]. Functionally, regulates arginine biosynthesis genes. The sequence is that of Arginine repressor from Shewanella sediminis (strain HAW-EB3).